Reading from the N-terminus, the 182-residue chain is Probable inosine/xanthosine triphosphatase (182 aa).

Mg(2+) is bound at residue Glu-65. Glu-65 to Ala-66 provides a ligand contact to substrate.

The protein belongs to the YjjX NTPase family. Homodimer. Mg(2+) serves as cofactor. Mn(2+) is required as a cofactor.

It carries out the reaction XTP + H2O = XDP + phosphate + H(+). The catalysed reaction is ITP + H2O = IDP + phosphate + H(+). Phosphatase that hydrolyzes non-canonical purine nucleotides such as XTP and ITP to their respective diphosphate derivatives. Probably excludes non-canonical purines from DNA/RNA precursor pool, thus preventing their incorporation into DNA/RNA and avoiding chromosomal lesions. The sequence is that of Probable inosine/xanthosine triphosphatase from Pyrobaculum neutrophilum (strain DSM 2338 / JCM 9278 / NBRC 100436 / V24Sta) (Thermoproteus neutrophilus).